The primary structure comprises 1153 residues: MDEEQMWKGFFFKLQELKMNPPTEHEHQLQDGDDGFFEKFGSLLRQKSQIDEGVLKSSLAPLEENGSGGEEDSDESPDGTLQLSQDSECTSIDTFATESTLASSSDKDISTSVLDSAPVMNVTDLYEEILFEIFNNIGCENNEECTNSLVEFVQDAFKIPNATHEEIYEAARLKEPPNVRLNVEIIKAENLMSKDSNGLSDPFVTLYLESNGSHRYNSSVKPATLNPIWEEHFSLPITENARDEVLIVEVWDFDAAETVKEKVNKILDVKGVKGLSKLMKEIAVTASSGKHDNELIGRAAITLKSIPVSGLTVWYNLEKGSKGRSRGSLLVNLALSAEKNKSVAVQEHKNLLKLLLMYELETSQVANYWWSGKFSPNAELIRSQHAAQSGLTPFDCALSQWHAYSTIHETHKLNFTLFNSILDVVVPVITYMQNDSEDVKTFWDGVKRLLPSCFAVLRKLRSKNTSDKNIIRALNEVLDILKKIKELEVPESVDIFPKSVYGWLHTNDTDETCNIDTAIEDAINTGTREWLEHIVEGSRQSKNTETDDEKLQYVIKLIQMVRSDLQRAMEYFDKIFYHKIQLNYSAVLYLFYDSKLAEICKSIIIEVCNNIKRLDVPDDQFEYLPNLENVNMGTTLFEVYLILKRYVQLGESLCSEPLELSNFYPWFERGVTHWLDISIIKALSRIQKAIDLDQLKAVDETVKYSSSAVDTLSIFYQIKIFWQQLDWPEVEGSYIFVAKIVNDLCRCCIFYAQQMSRRVENIFIADDNNKNFILSEEWCIAINNMDYIRQSLPSFIKELSIDDIIKRLGEYRTNLEAERCASTIKTVIENALDTERNQIVELIEIVARKMAPPIRRYLAEGAEVLAKDSNSMDQLMMYLESSLATLYDTLNEINFQRILDGIWSELSIIMYDLIQSNLDKRRPPAFFQNLNNTLQTMMDCFKMGNLQTSDIKILSSIQSRLRLYSLETSDLIHQYYLERLENQKSQESSPYGQLTITAQLTDTGLLLNILNARNLLPMDSNGSVDSFVKASFMPTSRFNDVPTVKTNVHNKSCFPLYDQEFRINLSDHQRSEKNSLIVFSIKDKDLFGMSSQYIAESYISFADLEATPPGEQIMMNLSRPEYTDSESLRALEYRLGDKQAKDFLKKLKNRSFS.

A disordered region spans residues 54–84 (VLKSSLAPLEENGSGGEEDSDESPDGTLQLS). Residues 162-288 (ATHEEIYEAA…MKEIAVTASS (127 aa)) enclose the C2 1 domain. Ca(2+) is bound by residues aspartate 195, aspartate 201, aspartate 252, phenylalanine 253, and aspartate 254. An MHD1 domain is found at 637–755 (FEVYLILKRY…RCCIFYAQQM (119 aa)). Residues 869–975 (SNSMDQLMMY…LETSDLIHQY (107 aa)) form the MHD2 domain. A C2 2 domain is found at 990–1114 (PYGQLTITAQ…EATPPGEQIM (125 aa)). Ca(2+)-binding residues include aspartate 1019, aspartate 1025, aspartate 1083, and aspartate 1085.

The protein belongs to the unc-13 family. In terms of assembly, interacts with Cam. Requires Ca(2+) as cofactor.

The protein localises to the cytoplasm. Its subcellular location is the cytoskeleton. The protein resides in the cell projection. It localises to the filopodium. It is found in the late endosome. The protein localises to the lysosome. Its function is as follows. Essential for tracheal development in embryos. Functions with the GTPase Rab39 and downstream of dnd, to regulate lumen fusion between previously separate tracheal branches (anastomosis). Essential component of secretory lysosome-related organelles (SLs) that are present in the tracheal fusion tip cells (FCs). Mediates intracellular fusion of the extending tracheal stalk cell lumen in the FCs by recruiting the SNARE complex component Syx1A to the SLs, this may then enable the SLs to interact with complementary SNAREs (such as Syb) present in the apical membrane of the FC-FC interface and the membranes of the separate tracheal stalk cells. May also function in the maturation and exocytosis of the SLs. The protein is Protein unc-13 homolog 4B of Drosophila melanogaster (Fruit fly).